A 431-amino-acid polypeptide reads, in one-letter code: Enolase (431 aa).

Glutamine 166 lines the (2R)-2-phosphoglycerate pocket. The Proton donor role is filled by glutamate 208. Residues aspartate 245, glutamate 288, and aspartate 315 each contribute to the Mg(2+) site. The (2R)-2-phosphoglycerate site is built by lysine 340, arginine 369, serine 370, and lysine 391. The active-site Proton acceptor is lysine 340.

Belongs to the enolase family. It depends on Mg(2+) as a cofactor.

The protein resides in the cytoplasm. Its subcellular location is the secreted. The protein localises to the cell surface. The enzyme catalyses (2R)-2-phosphoglycerate = phosphoenolpyruvate + H2O. It functions in the pathway carbohydrate degradation; glycolysis; pyruvate from D-glyceraldehyde 3-phosphate: step 4/5. Catalyzes the reversible conversion of 2-phosphoglycerate (2-PG) into phosphoenolpyruvate (PEP). It is essential for the degradation of carbohydrates via glycolysis. This Clostridium botulinum (strain Loch Maree / Type A3) protein is Enolase.